Here is a 483-residue protein sequence, read N- to C-terminus: (R)-mandelonitrile beta-glucosyltransferase (483 aa).

The active-site Proton acceptor is the His22. An an anthocyanidin-binding site is contributed by His22. Asp124 serves as the catalytic Charge relay. 7 residues coordinate UDP-alpha-D-glucose: Thr146, Gln363, His378, Trp381, Asn382, Ser383, and Glu386. An an anthocyanidin-binding site is contributed by Ala401. UDP-alpha-D-glucose-binding residues include Glu402 and Gln403.

This sequence belongs to the UDP-glycosyltransferase family.

It carries out the reaction (R)-mandelonitrile + UDP-alpha-D-glucose = (R)-prunasin + UDP + H(+). Functionally, involved in the biosynthesis of the cyanogenic glycoside (R)-prunasin, a precursor of (R)-amygdalin, which at high concentrations is associated with intense bitterness in kernels of almond. Stereo-selectively glucosylates (R)-mandelonitrile to produce (R)-prunasin. The protein is (R)-mandelonitrile beta-glucosyltransferase of Prunus dulcis (Almond).